The primary structure comprises 197 residues: Imidazoleglycerol-phosphate dehydratase (197 aa).

This sequence belongs to the imidazoleglycerol-phosphate dehydratase family.

Its subcellular location is the cytoplasm. It catalyses the reaction D-erythro-1-(imidazol-4-yl)glycerol 3-phosphate = 3-(imidazol-4-yl)-2-oxopropyl phosphate + H2O. Its pathway is amino-acid biosynthesis; L-histidine biosynthesis; L-histidine from 5-phospho-alpha-D-ribose 1-diphosphate: step 6/9. The sequence is that of Imidazoleglycerol-phosphate dehydratase from Hahella chejuensis (strain KCTC 2396).